A 595-amino-acid polypeptide reads, in one-letter code: Elongation factor 4 2 (595 aa).

Positions 4–187 (SHIRNFAIIA…AIKQRLPAPQ (184 aa)) constitute a tr-type G domain. GTP is bound by residues 16–21 (DHGKST) and 133–136 (NKVD).

Belongs to the TRAFAC class translation factor GTPase superfamily. Classic translation factor GTPase family. LepA subfamily.

The protein resides in the cell membrane. The enzyme catalyses GTP + H2O = GDP + phosphate + H(+). Functionally, required for accurate and efficient protein synthesis under certain stress conditions. May act as a fidelity factor of the translation reaction, by catalyzing a one-codon backward translocation of tRNAs on improperly translocated ribosomes. Back-translocation proceeds from a post-translocation (POST) complex to a pre-translocation (PRE) complex, thus giving elongation factor G a second chance to translocate the tRNAs correctly. Binds to ribosomes in a GTP-dependent manner. This is Elongation factor 4 2 from Lactiplantibacillus plantarum (strain ATCC BAA-793 / NCIMB 8826 / WCFS1) (Lactobacillus plantarum).